We begin with the raw amino-acid sequence, 371 residues long: Transcriptional regulator of yeast form adherence 2 (371 aa).

The segment at 16-44 (RNPAVLCSFYSKIGACRHGEKCSKKHLKP) adopts a C3H1-type 1 zinc-finger fold. Polar residues predominate over residues 94 to 107 (TVSQIDDSPHSNSG). Residues 94–194 (TVSQIDDSPH…NIEDAKLEDT (101 aa)) are disordered. A compositionally biased stretch (acidic residues) spans 115–124 (VETQEVETEN). Over residues 132–194 (GDVKIDHNED…NIEDAKLEDT (63 aa)) the composition is skewed to basic and acidic residues. Residues 192 to 279 (EDTEKDKLPE…KPVYSDLSPV (88 aa)) form the RRM domain. A C3H1-type 2 zinc finger spans residues 281 to 309 (DFNDACCEEYRDYHDCQRGAMCNYMHVRL). The tract at residues 337–371 (ELPGDIRSSSSTNDDETNGNENGISSTMAVLEQLS) is disordered. A compositionally biased stretch (polar residues) spans 355-371 (GNENGISSTMAVLEQLS).

Its subcellular location is the nucleus. Transcription factor required for yeast cell adherence to silicone substrate. This is Transcriptional regulator of yeast form adherence 2 (TRY2) from Candida albicans (strain SC5314 / ATCC MYA-2876) (Yeast).